The chain runs to 521 residues: Cytochrome P450 1A1 (521 aa).

Phe-229 contacts substrate. Cys-463 serves as a coordination point for heme.

It belongs to the cytochrome P450 family. Heme is required as a cofactor.

The protein localises to the endoplasmic reticulum membrane. Its subcellular location is the microsome membrane. It catalyses the reaction an organic molecule + reduced [NADPH--hemoprotein reductase] + O2 = an alcohol + oxidized [NADPH--hemoprotein reductase] + H2O + H(+). Cytochromes P450 are a group of heme-thiolate monooxygenases. They oxidize a variety of structurally unrelated compounds, including steroids, fatty acids, and xenobiotics. The sequence is that of Cytochrome P450 1A1 (cyp1a1) from Opsanus tau (Oyster toadfish).